Here is a 425-residue protein sequence, read N- to C-terminus: Serine--tRNA ligase (425 aa).

230-232 (TAE) contributes to the L-serine binding site. 261–263 (RSE) provides a ligand contact to ATP. Glutamate 284 is an L-serine binding site. 348–351 (EISS) contributes to the ATP binding site. Residue serine 384 participates in L-serine binding.

Belongs to the class-II aminoacyl-tRNA synthetase family. Type-1 seryl-tRNA synthetase subfamily. As to quaternary structure, homodimer. The tRNA molecule binds across the dimer.

Its subcellular location is the cytoplasm. It carries out the reaction tRNA(Ser) + L-serine + ATP = L-seryl-tRNA(Ser) + AMP + diphosphate + H(+). The catalysed reaction is tRNA(Sec) + L-serine + ATP = L-seryl-tRNA(Sec) + AMP + diphosphate + H(+). The protein operates within aminoacyl-tRNA biosynthesis; selenocysteinyl-tRNA(Sec) biosynthesis; L-seryl-tRNA(Sec) from L-serine and tRNA(Sec): step 1/1. Functionally, catalyzes the attachment of serine to tRNA(Ser). Is also able to aminoacylate tRNA(Sec) with serine, to form the misacylated tRNA L-seryl-tRNA(Sec), which will be further converted into selenocysteinyl-tRNA(Sec). This is Serine--tRNA ligase from Streptococcus pyogenes serotype M2 (strain MGAS10270).